We begin with the raw amino-acid sequence, 116 residues long: Large ribosomal subunit protein bL17 (116 aa).

The protein belongs to the bacterial ribosomal protein bL17 family. As to quaternary structure, part of the 50S ribosomal subunit. Contacts protein L32.

The protein is Large ribosomal subunit protein bL17 of Crocosphaera subtropica (strain ATCC 51142 / BH68) (Cyanothece sp. (strain ATCC 51142)).